The chain runs to 589 residues: Ubiquilin-1 (589 aa).

A compositionally biased stretch (gly residues) spans 1–11 (MAESGESGGPP). 2 disordered regions span residues 1–35 (MAESGESGGPPGSQDSAAGAEGAGAPAAAASAEPK) and 110–145 (NRPQDHSAQQTNTAGSNVTTSSTPNSNSTSGSATSN). Ala-2 bears the N-acetylalanine mark. A compositionally biased stretch (low complexity) spans 12–35 (GSQDSAAGAEGAGAPAAAASAEPK). The region spanning 37–111 (MKVTVKTPKE…VHLVIKTQNR (75 aa)) is the Ubiquitin-like domain. The segment covering 110-124 (NRPQDHSAQQTNTAG) has biased composition (polar residues). Low complexity predominate over residues 125-145 (SNVTTSSTPNSNSTSGSATSN). Residues 178-428 (QLLSNPEMMV…LNNPLFAGNP (251 aa)) form an interaction with UBXN4 region. STI1 domains follow at residues 182–210 (NPEMMVQIMENPFVQSMLSNPDLMRQLIM) and 212–251 (NPQMQQLIQRNPEISHMLNNPDIMRQTLELARNPAMMQEM). A disordered region spans residues 295–371 (PFASLVSNTS…NLVPGVGASM (77 aa)). The span at 299-313 (LVSNTSSGEGSQPSR) shows a compositional bias: polar residues. Residues 327–360 (QTSQSSSASSGTASTVGGTTGSTASGTSGQSTTA) are compositionally biased toward low complexity. 2 STI1 domains span residues 387-434 (NPQL…QEQM) and 438-470 (LPTFLQQMQNPDTLSAMSNPRAMQALLQIQQGL). The interval 488–520 (LGALGSTGGSSGTNGSNATPSENTSPTAGTTEP) is disordered. Over residues 489-499 (GALGSTGGSSG) the composition is skewed to gly residues. Positions 509–520 (ENTSPTAGTTEP) are enriched in polar residues. A UBA domain is found at 546–586 (RFQQQLEQPSAMGFLNREANLQALIATGGDINAAIERLLGS).

Monomer and homodimer. Heterodimer with UBQLN2. Binds CD47, NBL1, GABRA1, GABRA2, GABRA3, GABRA6, GABRB1, GABRB2 and GABRB3. Binds UBE3A, BTRC, P4HB and MTOR. Interacts with the proteasome 19S subunit. Interacts (via ubiquitin-like domain) with TREX1; the interaction is direct and may control TREX1 subcellular location. Forms a complex with UBXN4 and VCP. Interacts (via UBA domain) with UBQLN4 (via ubiquitin-like domain). Found in a complex with UBQLN2 and MAP1LC3A/B/C. The monomeric form interacts with PSEN1 and PSEN2. Interacts with ORAI1. Interacts (via UBA domain) with TICAM1. Interacts with EPS15. Interacts (via UBA domain) with UBA52 and (via ubiquitin-like domain) with PSMD3 and PSMD4. Interacts with HERPUD1. Interacts with MAP1LC3A/B/C in the presence of UBQLN4. Interacts (via ubiquitin-like domain) with EPS15 (via UIM domains) and both the ubiquitinated and non-ubiquitinated forms can interact with EPS15. Interacts (via ubiquitin-like domain) with EPS15L1, HGS (via UIM domain) and STAM2 (via UIM domain). Interacts with BCL2L10/BCL-B; in the cytoplasm. In terms of processing, degraded during both macroautophagy and during chaperone-mediated autophagy (CMA). Post-translationally, phosphorylated. Ubiquitinated.

The protein resides in the nucleus. Its subcellular location is the cytoplasm. The protein localises to the endoplasmic reticulum. It localises to the cytoplasmic vesicle. It is found in the autophagosome. The protein resides in the cell membrane. Functionally, plays an important role in the regulation of different protein degradation mechanisms and pathways including ubiquitin-proteasome system (UPS), autophagy and endoplasmic reticulum-associated protein degradation (ERAD) pathway. Mediates the proteasomal targeting of misfolded or accumulated proteins for degradation by binding (via UBA domain) to their polyubiquitin chains and by interacting (via ubiquitin-like domain) with the subunits of the proteasome. Plays a role in the ERAD pathway via its interaction with ER-localized proteins UBXN4, VCP and HERPUD1 and may form a link between the polyubiquitinated ERAD substrates and the proteasome. Plays a role in unfolded protein response (UPR) by attenuating the induction of UPR-inducible genes, DDTI3/CHOP, HSPA5 and PDIA2 during ER stress. Involved in the regulation of macroautophagy and autophagosome formation; required for maturation of autophagy-related protein LC3 from the cytosolic form LC3-I to the membrane-bound form LC3-II and may assist in the maturation of autophagosomes to autolysosomes by mediating autophagosome-lysosome fusion. Negatively regulates the TICAM1/TRIF-dependent toll-like receptor signaling pathway by decreasing the abundance of TICAM1 via the autophagic pathway. Promotes the ubiquitination and lysosomal degradation of ORAI1, consequently down-regulating the ORAI1-mediated Ca2+ mobilization. Suppresses the maturation and proteasomal degradation of amyloid beta A4 protein (A4) by stimulating the lysine 63 (K63)-linked polyubiquitination. Delays the maturation of A4 by sequestering it in the Golgi apparatus and preventing its transport to the cell surface for subsequent processing. Ubiquitinates BCL2L10 and thereby stabilizes protein abundance. In Pongo abelii (Sumatran orangutan), this protein is Ubiquilin-1 (UBQLN1).